We begin with the raw amino-acid sequence, 413 residues long: Ferredoxin--NADP reductase (413 aa).

Met-1 is subject to N-acetylmethionine. The region spanning 18-76 is the CpcD-like domain; that stretch reads NRLFVYEVIGLSQSTMTDGLDYPIRRSGSTFITVPLKRMNQEMRRITRMGGKIVSIKPL. Positions 74–120 are disordered; sequence KPLEGDSPLPHTEGIAKPSQSEGSGSEAVANPAPESNKTMTTTPKEK. The segment covering 107–116 has biased composition (polar residues); it reads PESNKTMTTT. The FAD-binding FR-type domain occupies 133 to 256; that stretch reads KTPYIGKVLE…TGPVGKEMLL (124 aa). Residues 192-195, 213-215, Tyr-219, 230-232, and Thr-271 each bind FAD; these read RLYS, CVR, and VCS. 2 residues coordinate NADP(+): Ser-195 and Arg-215. NADP(+) contacts are provided by residues Thr-271, 303-304, 333-334, 343-347, 372-373, and Glu-411; these read IP, SR, RMYIQ, and GL.

It belongs to the ferredoxin--NADP reductase type 1 family. In terms of assembly, purifies with both the classic phycobilisome (PBS) supercomplex (CpcG-PBS) and a photosystem I-associated PBS called CpcL-PBS; it accumulates to a higher level in CpcL-PBS. In both PBS it can be cross-linked to both phycocyanin subunits. The cofactor is FAD. Post-translationally, acetylated at the N-terminus; 6% of protein in CpcG-PBS and 12% of protein in CpcL-PBS is acetylated.

It is found in the cellular thylakoid membrane. The enzyme catalyses 2 reduced [2Fe-2S]-[ferredoxin] + NADP(+) + H(+) = 2 oxidized [2Fe-2S]-[ferredoxin] + NADPH. This Synechocystis sp. (strain ATCC 27184 / PCC 6803 / Kazusa) protein is Ferredoxin--NADP reductase.